The chain runs to 273 residues: 4-hydroxy-tetrahydrodipicolinate reductase (273 aa).

12–17 lines the NAD(+) pocket; sequence GAMGRM. Lys-39 serves as a coordination point for NADP(+). Residues 102 to 104 and 126 to 129 contribute to the NAD(+) site; these read GTT and ASNF. The active-site Proton donor/acceptor is His-159. His-160 contributes to the (S)-2,3,4,5-tetrahydrodipicolinate binding site. Lys-163 serves as the catalytic Proton donor. 169–170 provides a ligand contact to (S)-2,3,4,5-tetrahydrodipicolinate; sequence GT.

This sequence belongs to the DapB family. In terms of assembly, homotetramer.

The protein resides in the cytoplasm. The catalysed reaction is (S)-2,3,4,5-tetrahydrodipicolinate + NAD(+) + H2O = (2S,4S)-4-hydroxy-2,3,4,5-tetrahydrodipicolinate + NADH + H(+). The enzyme catalyses (S)-2,3,4,5-tetrahydrodipicolinate + NADP(+) + H2O = (2S,4S)-4-hydroxy-2,3,4,5-tetrahydrodipicolinate + NADPH + H(+). It participates in amino-acid biosynthesis; L-lysine biosynthesis via DAP pathway; (S)-tetrahydrodipicolinate from L-aspartate: step 4/4. In terms of biological role, catalyzes the conversion of 4-hydroxy-tetrahydrodipicolinate (HTPA) to tetrahydrodipicolinate. The protein is 4-hydroxy-tetrahydrodipicolinate reductase of Buchnera aphidicola subsp. Schizaphis graminum (strain Sg).